The following is a 448-amino-acid chain: Zinc finger and BTB domain-containing protein 44 (448 aa).

Positions C31–T98 constitute a BTB domain. Residues L289 to V298 show a composition bias toward basic and acidic residues. Residues L289 to Q320 form a disordered region. The span at S299–Q313 shows a compositional bias: low complexity. 2 consecutive C2H2-type zinc fingers follow at residues F394–H416 and F422–H444.

Its subcellular location is the nucleus. In Xenopus tropicalis (Western clawed frog), this protein is Zinc finger and BTB domain-containing protein 44 (zbtb44).